The chain runs to 156 residues: Small ribosomal subunit protein uS7c (156 aa).

This sequence belongs to the universal ribosomal protein uS7 family. Part of the 30S ribosomal subunit.

The protein resides in the plastid. It is found in the chloroplast. One of the primary rRNA binding proteins, it binds directly to 16S rRNA where it nucleates assembly of the head domain of the 30S subunit. The polypeptide is Small ribosomal subunit protein uS7c (rps7) (Pisum sativum (Garden pea)).